A 434-amino-acid polypeptide reads, in one-letter code: Tol-Pal system protein TolB (434 aa).

The N-terminal stretch at 1 to 24 is a signal peptide; sequence MKFSAYLTTLFIVLFSLFIQTVQA.

The protein belongs to the TolB family. The Tol-Pal system is composed of five core proteins: the inner membrane proteins TolA, TolQ and TolR, the periplasmic protein TolB and the outer membrane protein Pal. They form a network linking the inner and outer membranes and the peptidoglycan layer.

The protein resides in the periplasm. Its function is as follows. Part of the Tol-Pal system, which plays a role in outer membrane invagination during cell division and is important for maintaining outer membrane integrity. The sequence is that of Tol-Pal system protein TolB from Histophilus somni (strain 129Pt) (Haemophilus somnus).